Consider the following 305-residue polypeptide: MSDMNKILHKWSASLKKGTDFDSWGQLVEAIDEYQILARQLQKEAQSPANSSDFTEDQKKTIGKIATCLGLRSAALQYTQSQEGFTLEDVKKLEPILSSIVTFNKEFPFDVQPVPLRRILAPGEEENLEVDEEEEDGGAGIGSPDLFPARVPGTLLPRLPSEPGMTLLTIKIEKIGLKDAGQCIDPYITVSVKDLNGIDLTPVQDTPMATRKEDTYVHFNVEIEIQKHVEKLTKGAAIFFEFKHYKPKKRFTSTKCFAFMEMDEIKPGQTVIELYKKPTDFKRKKLQLLTKKPLYLHLLQTLLKD.

The interval 153–220 (GTLLPRLPSE…RKEDTYVHFN (68 aa)) is axin-binding. Positions 156-303 (LPRLPSEPGM…LYLHLLQTLL (148 aa)) constitute a C2 Aida-type domain.

The protein belongs to the AIDA family.

In terms of biological role, acts as a ventralizing factor during embryogenesis. Inhibits axin-mediated JNK activation by binding axin and disrupting axin homodimerization. This in turn antagonizes a Wnt/beta-catenin-independent dorsalization pathway activated by axin/JNK-signaling. The chain is Axin interactor, dorsalization-associated protein A (aida-a) from Xenopus laevis (African clawed frog).